The primary structure comprises 344 residues: MDENKKRALAAALSQIEKQFGKGSVMRMGDRVIEAVEVIPTGSLMLDIALGTGGLPKGRVVEIYGPESSGKTTLTLQAIAQCQKLGGTAAFIDAEHALDPVYAAKLGVNVDDLLLSQPDTGEQALEIADMLVRSSSVDIVVIDSVAALTPKAEIEGEMGDQLPGLQARLMSQALRKLTGNIKRSNTLVVFINQLRMKIGVMMPGQSPEVTTGGNALKFYASVRLDIRRIGAIKKGDEIIGNQTKIKVVKNKLAPPFKQVVTEILYGEGISREGELIDMGVEAKLVEKAGAWYSYGDERIGQGKDNARTYLRDNPQVAVRLEAELREKFQPAEAPREAGDDEEKE.

65–72 (GPESSGKT) provides a ligand contact to ATP.

The protein belongs to the RecA family.

The protein localises to the cytoplasm. In terms of biological role, can catalyze the hydrolysis of ATP in the presence of single-stranded DNA, the ATP-dependent uptake of single-stranded DNA by duplex DNA, and the ATP-dependent hybridization of homologous single-stranded DNAs. It interacts with LexA causing its activation and leading to its autocatalytic cleavage. The chain is Protein RecA from Xanthomonas oryzae pv. oryzae (strain PXO99A).